The chain runs to 253 residues: Small ribosomal subunit protein uS2 (253 aa).

Ser2 bears the N-acetylserine mark. A disordered region spans residues 212–253; that stretch reads QQAAEEAAAGEEDDEAKEEVAAEEQTEAADWAEGQSEEVASW. Residues 219–238 are compositionally biased toward acidic residues; the sequence is AAGEEDDEAKEEVAAEEQTE.

The protein belongs to the universal ribosomal protein uS2 family. In terms of assembly, component of the small ribosomal subunit. Mature ribosomes consist of a small (40S) and a large (60S) subunit. The 40S subunit contains about 33 different proteins and 1 molecule of RNA (18S). The 60S subunit contains about 49 different proteins and 3 molecules of RNA (25S, 5.8S and 5S). Interacts with RPS21.

The protein localises to the cytoplasm. Functionally, required for the assembly and/or stability of the 40S ribosomal subunit. Required for the processing of the 20S rRNA-precursor to mature 18S rRNA in a late step of the maturation of 40S ribosomal subunits. In Eremothecium gossypii (strain ATCC 10895 / CBS 109.51 / FGSC 9923 / NRRL Y-1056) (Yeast), this protein is Small ribosomal subunit protein uS2.